The chain runs to 452 residues: Phosphoglucosamine mutase (452 aa).

The Phosphoserine intermediate role is filled by serine 97. 4 residues coordinate Mg(2+): serine 97, aspartate 236, aspartate 238, and aspartate 240. A Phosphoserine modification is found at serine 97.

This sequence belongs to the phosphohexose mutase family. The cofactor is Mg(2+). In terms of processing, activated by phosphorylation.

It catalyses the reaction alpha-D-glucosamine 1-phosphate = D-glucosamine 6-phosphate. Catalyzes the conversion of glucosamine-6-phosphate to glucosamine-1-phosphate. This is Phosphoglucosamine mutase from Prochlorococcus marinus (strain MIT 9515).